Reading from the N-terminus, the 374-residue chain is Transcription factor NF-E2 45 kDa subunit (374 aa).

Disordered regions lie at residues 1 to 21 (MSPCPPQQSRNRVTQLPIPEP) and 40 to 61 (LNAPSEPSFEPPAPVPYPGPPP). The segment at 1 to 83 (MSPCPPQQSR…PGFPLPAPPY (83 aa)) is required for interaction with MAPK8. Positions 1-207 (MSPCPPQQSR…PPAETPLALE (207 aa)) are transactivation domain. Residues 48 to 61 (FEPPAPVPYPGPPP) are compositionally biased toward pro residues. Short sequence motifs (PXY motif) lie at residues 61-65 (PPPSY) and 79-83 (PAPPY). The segment at 132-165 (LSAGPSKPQEDPESDSGLSLNYSDAESLELEGTE) is disordered. Residue Ser-158 is modified to Phosphoserine; by MAPK8. Position 171 is a phosphoserine; by PKA (Ser-171). The disordered stretch occupies residues 207–227 (EPSSGPVRAKPTARGEAGSRD). Positions 267–330 (LVRDIRRRGK…EVMRQQLTDL (64 aa)) constitute a bZIP domain. Positions 269–288 (RDIRRRGKNKVAAQNCRKRK) are basic motif. Residues 292-299 (IVQLEREL) are leucine-zipper. Lys-369 is covalently cross-linked (Glycyl lysine isopeptide (Lys-Gly) (interchain with G-Cter in SUMO); alternate). Lys-369 is covalently cross-linked (Glycyl lysine isopeptide (Lys-Gly) (interchain with G-Cter in SUMO1); alternate).

The protein belongs to the bZIP family. CNC subfamily. In terms of assembly, homodimer; can bind DNA as a homodimer. Erythroid transcription activator nuclear factor erythroid-derived 2 (NF-E2), composed of a heterodimer of NFE2 and MAFK, possesses transactivation activity on beta-globin. Also forms high affinity heterodimer with MAFG; the interaction promotes erythropoiesis. Interacts (via the PXY motif 1) with ITCH (via the WW 1 domain); the interaction promotes 'Lys63'-linked ubiquitination of NFE2, translocates it to the cytoplasm and inhibits its transactivation activity. Interacts with KMT2D/MLL2; the interaction promotes transactivation of the beta-globin locus. Interacts with MAPK8 (phosphorylated form); the interaction leads to phosphorylation of NFE2 in undifferentiated cells. Post-translationally, phosphorylated on serine residues. In undifferentiated erythrocytes, phosphorylated by MAPK8 which then leads to ubiquitination and protein degradation. Sumoylated. Sumoylation is required for translocation to nuclear bodies PODs, anchoring to the gene loci, and transactivation of the beta-globin gene. In terms of processing, ubiquitinated mainly by 'Lys63'-linked ubiquitin. Polyubiquitination with 'Lys63'-linked ubiquitin by ITCH retains NFE2 in the cytoplasm preventing its transactivation activity. In undifferentiated erythrocyte, is ubiquitinated after MAPK8-mediatd phosphorylation leading to protein degradation.

It localises to the nucleus. The protein resides in the cytoplasm. In terms of biological role, component of the NF-E2 complex essential for regulating erythroid and megakaryocytic maturation and differentiation. Binds to the hypersensitive site 2 (HS2) of the beta-globin control region (LCR). This subunit (NFE2) recognizes the TCAT/C sequence of the AP-1-like core palindrome present in a number of erythroid and megakaryocytic gene promoters. Requires MAFK or other small MAF proteins for binding to the NF-E2 motif. May play a role in all aspects of hemoglobin production from globin and heme synthesis to procurement of iron. The protein is Transcription factor NF-E2 45 kDa subunit (NFE2) of Bos taurus (Bovine).